The sequence spans 153 residues: HTH-type transcriptional regulator Zrp (153 aa).

Residues 2-63 (IDYRDRHILS…LLDRKKINLP (62 aa)) enclose the HTH asnC-type domain. A DNA-binding region (H-T-H motif) is located at residues 21 to 40 (LAEIAERVALSVSACSRRVA).

The chain is HTH-type transcriptional regulator Zrp (zrp) from Zymomonas mobilis subsp. mobilis (strain ATCC 10988 / DSM 424 / LMG 404 / NCIMB 8938 / NRRL B-806 / ZM1).